The sequence spans 234 residues: Triosephosphate isomerase (234 aa).

8 to 10 (NFK) contacts substrate. His90 acts as the Electrophile in catalysis. Glu159 functions as the Proton acceptor in the catalytic mechanism. The substrate site is built by Gly165 and Ser197.

This sequence belongs to the triosephosphate isomerase family. In terms of assembly, homodimer.

It localises to the cytoplasm. It catalyses the reaction D-glyceraldehyde 3-phosphate = dihydroxyacetone phosphate. It participates in carbohydrate biosynthesis; gluconeogenesis. It functions in the pathway carbohydrate degradation; glycolysis; D-glyceraldehyde 3-phosphate from glycerone phosphate: step 1/1. Its function is as follows. Involved in the gluconeogenesis. Catalyzes stereospecifically the conversion of dihydroxyacetone phosphate (DHAP) to D-glyceraldehyde-3-phosphate (G3P). This chain is Triosephosphate isomerase, found in Helicobacter pylori (strain Shi470).